A 347-amino-acid polypeptide reads, in one-letter code: MTICTDIIANGYDLKTLIYNSGVVSIKVIALIICLLLATAYLTFAERKVIAYMQLRVGPSLAGPFGLLQPIADAVKLVFKEPIIPAKADRKLFIIAPIITFVLSLLGWSVIPIDHDIVLSRIHIGGILFILAVTSLGVYGIIIAGWASNSKYAFLGAVRSAAQMISYELAMALSIVAVLIVTGEMDLIQIVEAQKTRPIWLTIMMLPLAVIYFISILAKTNRLPFDLPEAESELVAGYNVEYSSMAFAMFFLGEYANMILGSSLMTIMFLGGYLPPFNLEILTFIPGYIWFILKVSMVLFCFLWIRATLPRYRYDQLMYLGLKVFLPIVLAWIIVVSAILVYSNNLP.

The next 9 helical transmembrane spans lie at 22–42 (GVVS…TAYL), 59–79 (PSLA…KLVF), 93–113 (FIIA…VIPI), 124–144 (IGGI…IIIA), 171–191 (MALS…IQIV), 198–218 (PIWL…SILA), 240–260 (VEYS…NMIL), 285–305 (IPGY…FLWI), and 321–341 (GLKV…AILV).

The protein belongs to the complex I subunit 1 family. NDH-1 is composed of 14 different subunits. Subunits NuoA, H, J, K, L, M, N constitute the membrane sector of the complex.

It localises to the cell inner membrane. The enzyme catalyses a quinone + NADH + 5 H(+)(in) = a quinol + NAD(+) + 4 H(+)(out). In terms of biological role, NDH-1 shuttles electrons from NADH, via FMN and iron-sulfur (Fe-S) centers, to quinones in the respiratory chain. The immediate electron acceptor for the enzyme in this species is believed to be ubiquinone. Couples the redox reaction to proton translocation (for every two electrons transferred, four hydrogen ions are translocated across the cytoplasmic membrane), and thus conserves the redox energy in a proton gradient. This subunit may bind ubiquinone. The sequence is that of NADH-quinone oxidoreductase subunit H from Orientia tsutsugamushi (strain Ikeda) (Rickettsia tsutsugamushi).